Consider the following 195-residue polypeptide: NADH-quinone oxidoreductase subunit B (195 aa).

[4Fe-4S] cluster is bound by residues C74, C75, C139, and C169.

Belongs to the complex I 20 kDa subunit family. In terms of assembly, NDH-1 is composed of 14 different subunits. Subunits NuoB, C, D, E, F, and G constitute the peripheral sector of the complex. It depends on [4Fe-4S] cluster as a cofactor.

It is found in the cell inner membrane. The catalysed reaction is a quinone + NADH + 5 H(+)(in) = a quinol + NAD(+) + 4 H(+)(out). Its function is as follows. NDH-1 shuttles electrons from NADH, via FMN and iron-sulfur (Fe-S) centers, to quinones in the respiratory chain. The immediate electron acceptor for the enzyme in this species is believed to be ubiquinone. Couples the redox reaction to proton translocation (for every two electrons transferred, four hydrogen ions are translocated across the cytoplasmic membrane), and thus conserves the redox energy in a proton gradient. In Methylobacterium sp. (strain 4-46), this protein is NADH-quinone oxidoreductase subunit B.